The following is a 178-amino-acid chain: Fatty-acid and retinol-binding protein 1 (178 aa).

Residues 1–16 (MYHRLILLALVGTTMA) form the signal peptide. Coiled coils occupy residues 67-89 (DAAL…ELRN) and 130-153 (KQAA…ELKV).

The protein belongs to the fatty-acid and retinol-binding protein (FARBP) family. Post-translationally, not glycosylated.

The protein localises to the secreted. In terms of biological role, binds retinol and different fatty acids. In Brugia pahangi (Filarial nematode worm), this protein is Fatty-acid and retinol-binding protein 1.